The primary structure comprises 1183 residues: Probable RNA-dependent RNA polymerase 4 (1183 aa).

The protein belongs to the RdRP family. In terms of tissue distribution, expressed in shoot apical meristem (SAM) and panicles.

It carries out the reaction RNA(n) + a ribonucleoside 5'-triphosphate = RNA(n+1) + diphosphate. Probably involved in the RNA silencing pathway and required for the generation of small interfering RNAs (siRNAs). This chain is Probable RNA-dependent RNA polymerase 4 (RDR4), found in Oryza sativa subsp. japonica (Rice).